We begin with the raw amino-acid sequence, 427 residues long: Transcription termination factor Rho (427 aa).

The Rho RNA-BD domain maps to Leu51–Asp125. ATP contacts are provided by residues Gly168 to Gly173, Lys180 to Met185, and Arg211.

This sequence belongs to the Rho family. As to quaternary structure, homohexamer. The homohexamer assembles into an open ring structure.

Functionally, facilitates transcription termination by a mechanism that involves Rho binding to the nascent RNA, activation of Rho's RNA-dependent ATPase activity, and release of the mRNA from the DNA template. In Bacillus subtilis (strain 168), this protein is Transcription termination factor Rho.